The chain runs to 89 residues: Neuropeptide S (89 aa).

Positions 1 to 23 (MISSVKLNLILVLSLSTMHVFWC) are cleaved as a signal peptide. Residues 24–67 (YPVPSSKVSGKSDYFLILLNSCPTRLDRSKELAFLKPILEKMFV) constitute a propeptide that is removed on maturation.

Its subcellular location is the secreted. In terms of biological role, modulates arousal and anxiety. May play an important anorexigenic role. Binds to its receptor NPSR1 with nanomolar affinity to increase intracellular calcium concentrations. This is Neuropeptide S (NPS) from Homo sapiens (Human).